The primary structure comprises 822 residues: Probable phosphoketolase (822 aa).

Belongs to the XFP family. Thiamine diphosphate serves as cofactor.

This chain is Probable phosphoketolase, found in Lactococcus lactis subsp. lactis (strain IL1403) (Streptococcus lactis).